The chain runs to 360 residues: MVGVRVLAAMSGGVDSAVAAARAAEAGHDVTGVHLALARNPQTYRTGARGCCTLEDSRDARRAADVLSIPFYVWDMADRFQADVVDDFVAEYAAGRTPNPCLRCNEKIKFAAVLDRAVALGFDAVVTGHHARLGADGLLRRSVDLAKDQSYVLGVLTREQLSRSMFPLGDSTKTQVRAEATRRGLAVADKPDSHDICFVADGDTRGFLARRLGTTPGDVVDGDTGEVVGRHTGAYAYTVGQRRGLHLDRPAPDGRPRYVLSITPKTNTVTVGPAEALAVSQVQARRPVWIGGPRPADPVECEVQLRAHGDVVPATVAVTDDGLRAELHQPLRGVAAGQAIVAYRPDPAGDIVLGSATIAA.

ATP-binding positions include 9 to 16 (AMSGGVDS) and L35. C104 (nucleophile) is an active-site residue. A disulfide bond links C104 and C197. ATP is bound at residue G128. Residues 147–149 (KDQ) are interaction with tRNA. The active-site Cysteine persulfide intermediate is the C197.

The protein belongs to the MnmA/TRMU family.

It localises to the cytoplasm. It catalyses the reaction S-sulfanyl-L-cysteinyl-[protein] + uridine(34) in tRNA + AH2 + ATP = 2-thiouridine(34) in tRNA + L-cysteinyl-[protein] + A + AMP + diphosphate + H(+). Its function is as follows. Catalyzes the 2-thiolation of uridine at the wobble position (U34) of tRNA, leading to the formation of s(2)U34. The protein is tRNA-specific 2-thiouridylase MnmA of Salinispora tropica (strain ATCC BAA-916 / DSM 44818 / JCM 13857 / NBRC 105044 / CNB-440).